Here is a 493-residue protein sequence, read N- to C-terminus: MGTTKVTPSLVFAVTVATIGSFQFGYNTGVINAPETILKDFLNYTLEERLEDLPSEGLLTALWSLCVAIFSVGGMIGSFSVGLFVNRFGRRNSMLLVNLLAIIAGCLMGFAKIAESVEMLILGRLLIGIFCGLCTGFVPMYIGEVSPTALRGAFGTLNQLGIVVGILVAQIFGLDFILGSEELWPGLLGLTIIPAILQSAALPFCPESPRFLLINKKEEDQATEILQRLWGTSDVVQEIQEMKDESVRMSQEKQVTVLELFRSPNYVQPLLISIVLQLSQQLSGINAVFYYSTGIFKDAGVQEPIYATIGAGVVNTIFTVVSLFLVERAGRRTLHMIGLGGMAVCSVFMTISLLLKDDYEAMSFVCIVAILIYVAFFEIGPGPIPWFIVAELFSQGPRPAAIAVAGCCNWTSNFLVGMLFPSAAAYLGAYVFIIFAAFLIFFLIFTFFKVPETKGRTFEDIARAFEGQAHSGKGPAGVELNSMQPVKETPGNA.

At 1–10 (MGTTKVTPSL) the chain is on the cytoplasmic side. Residues 11-32 (VFAVTVATIGSFQFGYNTGVIN) form a helical membrane-spanning segment. Over 33-64 (APETILKDFLNYTLEERLEDLPSEGLLTALWS) the chain is Extracellular. A glycan (N-linked (GlcNAc...) asparagine) is linked at Asn43. Residues 65–85 (LCVAIFSVGGMIGSFSVGLFV) form a helical membrane-spanning segment. Residues 86 to 90 (NRFGR) are Cytoplasmic-facing. Residues 91–111 (RNSMLLVNLLAIIAGCLMGFA) traverse the membrane as a helical segment. Topologically, residues 112–118 (KIAESVE) are extracellular. Residues 119–142 (MLILGRLLIGIFCGLCTGFVPMYI) traverse the membrane as a helical segment. Residues 143–153 (GEVSPTALRGA) are Cytoplasmic-facing. A helical transmembrane segment spans residues 154–174 (FGTLNQLGIVVGILVAQIFGL). Gln159 is a binding site for D-glucose. Topologically, residues 175-183 (DFILGSEEL) are extracellular. Residues 184–204 (WPGLLGLTIIPAILQSAALPF) form a helical membrane-spanning segment. The Cytoplasmic portion of the chain corresponds to 205 to 269 (CPESPRFLLI…LFRSPNYVQP (65 aa)). Thr232 bears the Phosphothreonine mark. A helical transmembrane segment spans residues 270–290 (LLISIVLQLSQQLSGINAVFY). Residues 277-279 (QLS) form an important for selectivity against fructose region. D-glucose contacts are provided by residues 280-281 (QQ) and Asn286. Over 291–304 (YSTGIFKDAGVQEP) the chain is Extracellular. The helical transmembrane segment at 305-325 (IYATIGAGVVNTIFTVVSLFL) threads the bilayer. Asn315 is a D-glucose binding site. The Cytoplasmic portion of the chain corresponds to 326–331 (VERAGR). The chain crosses the membrane as a helical span at residues 332–352 (RTLHMIGLGGMAVCSVFMTIS). Over 353-363 (LLLKDDYEAMS) the chain is Extracellular. Residues 364–389 (FVCIVAILIYVAFFEIGPGPIPWFIV) traverse the membrane as a helical segment. D-glucose-binding residues include Glu378 and Trp386. Topologically, residues 390-399 (AELFSQGPRP) are cytoplasmic. The helical transmembrane segment at 400–420 (AAIAVAGCCNWTSNFLVGMLF) threads the bilayer. At 421-429 (PSAAAYLGA) the chain is on the extracellular side. Residues 430–450 (YVFIIFAAFLIFFLIFTFFKV) traverse the membrane as a helical segment. At 451–493 (PETKGRTFEDIARAFEGQAHSGKGPAGVELNSMQPVKETPGNA) the chain is on the cytoplasmic side. The tract at residues 469-493 (AHSGKGPAGVELNSMQPVKETPGNA) is disordered. Phosphoserine is present on residues Ser471 and Ser482. Thr489 is subject to Phosphothreonine.

This sequence belongs to the major facilitator superfamily. Sugar transporter (TC 2.A.1.1) family. Glucose transporter subfamily. In terms of assembly, interacts with SMIM43; the interaction may promote SLC2A3-mediated glucose transport to meet the energy needs of mesendoderm differentiation. Expressed in spermatozoa (at protein level). Detected in brain (at protein level). Abundantly expressed in the hippocampus, cerebellum and cerebral cortex with lower expression in the dentate gyrus and piriform cortex.

The protein resides in the cell membrane. Its subcellular location is the perikaryon. The protein localises to the cell projection. The enzyme catalyses D-glucose(out) = D-glucose(in). It catalyses the reaction D-galactose(in) = D-galactose(out). Its activity is regulated as follows. Deoxyglucose transport is inhibited by D-glucose, D-galactose and maltose. Galactose transport is inhibited by D-glucose and maltose. Facilitative glucose transporter. Can also mediate the uptake of various other monosaccharides across the cell membrane. Mediates the uptake of glucose, 2-deoxyglucose, galactose, mannose, xylose and fucose, and probably also dehydroascorbate. Does not mediate fructose transport. Required for mesendoderm differentiation. This chain is Solute carrier family 2, facilitated glucose transporter member 3, found in Mus musculus (Mouse).